The primary structure comprises 431 residues: uncharacterized protein (431 aa).

2 4Fe-4S ferredoxin-type domains span residues valine 336–aspartate 367 and isoleucine 362–glycine 391.

This is an uncharacterized protein from Methanothermobacter thermautotrophicus (strain ATCC 29096 / DSM 1053 / JCM 10044 / NBRC 100330 / Delta H) (Methanobacterium thermoautotrophicum).